A 337-amino-acid polypeptide reads, in one-letter code: Prenyltransferase terC (337 aa).

Aspartate 111 and aspartate 115 together coordinate Mg(2+).

The protein belongs to the FPP/GGPP synthase family. Mg(2+) is required as a cofactor.

It participates in secondary metabolite biosynthesis. Prenyltransferase; part of the gene cluster that mediates the biosynthesis of terpendoles, indole-diterpene (IDT) mycotoxins including terpendole I, terpendole K, terpendole C, as well as the kinesin Eg5 inhibitor terpendole E. Terpendoles biosynthesis begins with the synthesis of geranylgeranyl diphosphate (GGPP) by a yet unidentified GGPP synthase. Condensation of indole-3-glycerol phosphate with GGPP by the prenyltransferase terC then forms 3-geranylgeranylindole (3-GGI), followed by epoxidation and cyclization of this intermediate (by the FAD-dependent monooxygeanse terM and the terpene cyclase terB) to form paspaline. The cytochrome monooxygenase terQ then hydroxylates paspalline at C-11 to yield terpendole E. The cytochrome monooxygenase terP converts terpendole E to 13-desoxyterpendole I, and terQ converts 13-desoxyterpendole I into terpendole I. TerF and terK are required for conversion of terpendole I to terpendole C which is further converted to terpendole K. This Tolypocladium album (Soil fungus) protein is Prenyltransferase terC.